A 112-amino-acid polypeptide reads, in one-letter code: Cell cycle protein GpsB (112 aa).

Positions 38-72 form a coiled coil; sequence IKDYEAFHKEFEQLKQQNARLKRELEEQKLAATQV.

Belongs to the GpsB family. As to quaternary structure, forms polymers through the coiled coil domains. Interacts with PBP1, MreC and EzrA.

The protein localises to the cytoplasm. Functionally, divisome component that associates with the complex late in its assembly, after the Z-ring is formed, and is dependent on DivIC and PBP2B for its recruitment to the divisome. Together with EzrA, is a key component of the system that regulates PBP1 localization during cell cycle progression. Its main role could be the removal of PBP1 from the cell pole after pole maturation is completed. Also contributes to the recruitment of PBP1 to the division complex. Not essential for septum formation. The sequence is that of Cell cycle protein GpsB from Bacillus anthracis (strain A0248).